Consider the following 241-residue polypeptide: Ion-translocating oxidoreductase complex subunit E (241 aa).

6 consecutive transmembrane segments (helical) span residues 22–42 (LLGLCPVLAITVNAINAIGLG), 69–89 (IPIYIIIISSVVSSIDLVIKA), 91–111 (AFNLYQSLGIFIPLIITNCIV), 124–144 (VLVSILDGLSIGLGSTLTMFL), 157–177 (LFFGIEHVLGESFRFLYIEVL), and 182–202 (VFLLFAFPSGAFMILGIVLAG).

The protein belongs to the NqrDE/RnfAE family. In terms of assembly, the complex is composed of six subunits: RnfA, RnfB, RnfC, RnfD, RnfE and RnfG.

It is found in the cell inner membrane. Functionally, part of a membrane-bound complex that couples electron transfer with translocation of ions across the membrane. The chain is Ion-translocating oxidoreductase complex subunit E from Buchnera aphidicola subsp. Baizongia pistaciae (strain Bp).